Reading from the N-terminus, the 95-residue chain is Large ribosomal subunit protein bL27 (95 aa).

Positions 1–6 (MKLQLF) are excised as a propeptide. Residues 1–25 (MKLQLFAHKKGVGSSRNGRDSESKR) form a disordered region.

The protein belongs to the bacterial ribosomal protein bL27 family. In terms of processing, the N-terminus is cleaved by ribosomal processing cysteine protease Prp.

The protein is Large ribosomal subunit protein bL27 of Thermoanaerobacter pseudethanolicus (strain ATCC 33223 / 39E) (Clostridium thermohydrosulfuricum).